Reading from the N-terminus, the 335-residue chain is N-acetyl-gamma-glutamyl-phosphate reductase (335 aa).

Cysteine 156 is a catalytic residue.

It belongs to the NAGSA dehydrogenase family. Type 1 subfamily.

It localises to the cytoplasm. It carries out the reaction N-acetyl-L-glutamate 5-semialdehyde + phosphate + NADP(+) = N-acetyl-L-glutamyl 5-phosphate + NADPH + H(+). It participates in amino-acid biosynthesis; L-arginine biosynthesis; N(2)-acetyl-L-ornithine from L-glutamate: step 3/4. Catalyzes the NADPH-dependent reduction of N-acetyl-5-glutamyl phosphate to yield N-acetyl-L-glutamate 5-semialdehyde. This Aeromonas salmonicida (strain A449) protein is N-acetyl-gamma-glutamyl-phosphate reductase.